Here is a 218-residue protein sequence, read N- to C-terminus: MGTYKAEDDYDYLFKVVLTGDSGVGKSNLLSRFTRNDFSHDSRSTIGVEFATRSIQVDDKIVKAQIWDTAGQERYRAITSAYYRGAVGALLVYDVTRHVTFENVERWLKELRDHTDANTVIMLVGNKADLNHLRAISTEEVKDFAERENTFFMETSALEAINVENAFTEVLTQIYRVVSKKALDAGDDPTTALPKGQMINVGSRDDVSAVKKSGCCAT.

20–27 (GDSGVGKS) lines the GTP pocket. The Effector region signature appears at 42-50 (SRSTIGVEF). Residues 68–72 (DTAGQ), 126–129 (NKAD), and 156–157 (SA) contribute to the GTP site. Residues Cys-215 and Cys-216 are each lipidated (S-geranylgeranyl cysteine).

It belongs to the small GTPase superfamily. Rab family.

It is found in the cell membrane. Functionally, intracellular vesicle trafficking and protein transport. The sequence is that of Ras-related protein RABA1h (RABA1H) from Arabidopsis thaliana (Mouse-ear cress).